The chain runs to 85 residues: MSSLDKTMHFDFNQNKGKNVYDTLQDVYNALEEKGYNPVNQIVGYLLSGDPAYIPRHNDARNLILKHERDEIIEELVKSYLGKNK.

This sequence belongs to the UPF0297 family.

This chain is UPF0297 protein lhv_0439, found in Lactobacillus helveticus (strain DPC 4571).